The sequence spans 321 residues: GDP-L-fucose synthase (321 aa).

NADP(+)-binding positions include 10–16, 36–41, and 105–108; these read GHRGMVG, RDELNL, and LGSS. Tyr-136 functions as the Proton donor/acceptor in the catalytic mechanism. NADP(+) is bound by residues Lys-140, 163 to 166, and His-179; that span reads PTNL. The substrate site is built by Arg-187, Trp-202, Arg-209, and Asp-278.

Belongs to the NAD(P)-dependent epimerase/dehydratase family. Fucose synthase subfamily. Homodimer.

Its subcellular location is the cytoplasm. The catalysed reaction is GDP-beta-L-fucose + NADP(+) = GDP-4-dehydro-alpha-D-rhamnose + NADPH + H(+). It functions in the pathway nucleotide-sugar biosynthesis; GDP-L-fucose biosynthesis via de novo pathway; GDP-L-fucose from GDP-alpha-D-mannose: step 2/2. The protein operates within exopolysaccharide biosynthesis; colanic acid biosynthesis. With respect to regulation, subject to product inhibition by NADP and GDP-fucose. Catalyzes the two-step NADP-dependent conversion of GDP-4-dehydro-6-deoxy-D-mannose to GDP-fucose, involving an epimerase and a reductase reaction. The protein is GDP-L-fucose synthase of Escherichia coli (strain K12).